A 1189-amino-acid chain; its full sequence is Magnesium-chelatase subunit H (1189 aa).

Belongs to the Mg-chelatase subunit H family.

The enzyme catalyses protoporphyrin IX + Mg(2+) + ATP + H2O = Mg-protoporphyrin IX + ADP + phosphate + 3 H(+). The protein operates within porphyrin-containing compound metabolism; bacteriochlorophyll biosynthesis (light-independent). Functionally, involved in bacteriochlorophyll pigment biosynthesis; introduces a magnesium ion into protoporphyrin IX to yield Mg-protoroporphyrin IX. This is Magnesium-chelatase subunit H (bchH) from Rhodobacter capsulatus (strain ATCC BAA-309 / NBRC 16581 / SB1003).